A 635-amino-acid polypeptide reads, in one-letter code: Cytoplasmic polyadenylation element-binding protein 4 (635 aa).

Disordered regions lie at residues 1-70 (MQDD…TLRL), 149-284 (GFGG…GFNT), and 337-369 (LFPM…PHQN). The span at 14–30 (PQLQQESQEGQDKQTLS) shows a compositional bias: polar residues. Over residues 166-182 (PSPHPHFQHPHNQHRRS) the composition is skewed to basic residues. Residues 216–231 (GSYQSPSSTPSSTSWS) are compositionally biased toward low complexity. Gly residues predominate over residues 232 to 241 (PGGGYGGWGS). The segment covering 254–283 (PLNSISPLKKSFPNNQTQTQKYPRNNSGFN) has biased composition (polar residues). Residues 341–353 (EDERSYGEDERSD) show a composition bias toward basic and acidic residues. RRM domains are found at residues 378 to 469 (RKVF…PWNL) and 486 to 568 (KTIF…PYVL).

This sequence belongs to the RRM CPEB family.

Its subcellular location is the cytoplasm. The protein localises to the cell projection. It is found in the dendrite. It localises to the dendritic spine. The protein resides in the postsynaptic density. Its subcellular location is the axon. The protein localises to the growth cone. It is found in the endoplasmic reticulum. It localises to the perinuclear region. Its function is as follows. Sequence-specific RNA-binding protein that binds to the cytoplasmic polyadenylation element (CPE), an uridine-rich sequence element (consensus sequence 5'-UUUUUAU-3') within the mRNA 3'-UTR. RNA binding results in a clear conformational change analogous to the Venus fly trap mechanism. The chain is Cytoplasmic polyadenylation element-binding protein 4 (cpeb4) from Danio rerio (Zebrafish).